The chain runs to 658 residues: Zinc finger protein 135 (658 aa).

The KRAB domain occupies valine 14–proline 85. Residues leucine 171–arginine 196 form a disordered region. 16 consecutive C2H2-type zinc fingers follow at residues tyrosine 214 to histidine 236, tyrosine 242 to histidine 264, tyrosine 270 to histidine 292, tyrosine 298 to histidine 320, tyrosine 326 to histidine 348, tyrosine 354 to histidine 376, tyrosine 382 to histidine 404, tyrosine 410 to histidine 432, tyrosine 438 to histidine 460, tyrosine 466 to histidine 488, tyrosine 494 to histidine 516, tyrosine 522 to histidine 544, tyrosine 550 to histidine 572, tyrosine 578 to histidine 600, tyrosine 606 to histidine 628, and tyrosine 634 to histidine 656.

The protein belongs to the krueppel C2H2-type zinc-finger protein family.

The protein resides in the nucleus. Its function is as follows. Plays a role in the regulation of cell morphology and cytoskeletal organization. May be involved in transcriptional regulation. The sequence is that of Zinc finger protein 135 (ZNF135) from Homo sapiens (Human).